We begin with the raw amino-acid sequence, 571 residues long: PHD and RING finger domain-containing protein C126.07c (571 aa).

The RING-type 1; atypical zinc finger occupies 18–79 (CIICLSNLPN…RVANTCPLCR (62 aa)). A PHD-type zinc finger spans residues 122-170 (TCRCVICGRSDHAEVLLLCDGCDDAYHTYCLNMDAVPIEEFYCPNCVLL). An RING-type 2; degenerate zinc finger spans residues 125–168 (CVICGRSDHAEVLLLCDGCDDAYHTYCLNMDAVPIEEFYCPNCV). The span at 305–324 (ATEATISNPRPSSGRFQQTP) shows a compositional bias: polar residues. The segment at 305–377 (ATEATISNPR…VLGNNSSSKS (73 aa)) is disordered. The segment covering 346–356 (RRQKRPTRRHI) has biased composition (basic residues). Over residues 359-377 (SNKSSGSSTVLGNNSSSKS) the composition is skewed to polar residues.

The protein resides in the cytoplasm. It is found in the nucleus. In Schizosaccharomyces pombe (strain 972 / ATCC 24843) (Fission yeast), this protein is PHD and RING finger domain-containing protein C126.07c.